A 469-amino-acid polypeptide reads, in one-letter code: Lipase A (469 aa).

An N-terminal signal peptide occupies residues 1 to 22 (MMFLTQLVSALFLFFLGPISYG). Residues 40-51 (PSEDPFYQPPPG) show a composition bias toward pro residues. The interval 40-59 (PSEDPFYQPPPGYEETEPGT) is disordered. A glycan (N-linked (GlcNAc...) asparagine) is linked at N111. A disulfide bridge connects residues C129 and C304. Catalysis depends on charge relay system residues S217, D361, and H393. C377 and C421 are joined by a disulfide.

Belongs to the AB hydrolase superfamily. Lipase family. Class Lip subfamily. As to quaternary structure, monomer.

Its subcellular location is the secreted. The enzyme catalyses a triacylglycerol + H2O = a diacylglycerol + a fatty acid + H(+). Functionally, hydrolyzes triglycerides, with a preference for substrates with short-chain lengths (C4 to C8). The protein is Lipase A of Arthroderma benhamiae (strain ATCC MYA-4681 / CBS 112371) (Trichophyton mentagrophytes).